We begin with the raw amino-acid sequence, 113 residues long: U11-theraphotoxin-Hhn1t (113 aa).

The first 21 residues, 1 to 21, serve as a signal peptide directing secretion; it reads MNTVRVTFLLVFVLAVSLGQA. Residues 22–74 constitute a propeptide that is removed on maturation; that stretch reads DKDENRMEMQEKTEQGKSYLDFAENLLLQKLEELEAKLLEEDSEESRNSRQKR. Residues 60-69 show a composition bias toward basic and acidic residues; that stretch reads LEEDSEESRN. Residues 60–83 are disordered; it reads LEEDSEESRNSRQKRCIGEGVPCD. 3 cysteine pairs are disulfide-bonded: Cys-75-Cys-90, Cys-82-Cys-95, and Cys-89-Cys-110.

This sequence belongs to the neurotoxin 14 (magi-1) family. 01 (HNTX-16) subfamily. As to expression, expressed by the venom gland.

It is found in the secreted. In terms of biological role, probable ion channel inhibitor. The polypeptide is U11-theraphotoxin-Hhn1t (Cyriopagopus hainanus (Chinese bird spider)).